We begin with the raw amino-acid sequence, 313 residues long: Ribose-phosphate pyrophosphokinase (313 aa).

ATP-binding positions include 40 to 42 and 98 to 99; these read DGE and RQ. His132 and Asp172 together coordinate Mg(2+). Lys195 is a catalytic residue. D-ribose 5-phosphate contacts are provided by residues Arg197, Asp221, and 225-229; that span reads DTAGT.

The protein belongs to the ribose-phosphate pyrophosphokinase family. Class I subfamily. As to quaternary structure, homohexamer. Mg(2+) serves as cofactor.

Its subcellular location is the cytoplasm. It carries out the reaction D-ribose 5-phosphate + ATP = 5-phospho-alpha-D-ribose 1-diphosphate + AMP + H(+). Its pathway is metabolic intermediate biosynthesis; 5-phospho-alpha-D-ribose 1-diphosphate biosynthesis; 5-phospho-alpha-D-ribose 1-diphosphate from D-ribose 5-phosphate (route I): step 1/1. Its function is as follows. Involved in the biosynthesis of the central metabolite phospho-alpha-D-ribosyl-1-pyrophosphate (PRPP) via the transfer of pyrophosphoryl group from ATP to 1-hydroxyl of ribose-5-phosphate (Rib-5-P). The polypeptide is Ribose-phosphate pyrophosphokinase (Porphyromonas gingivalis (strain ATCC BAA-308 / W83)).